The primary structure comprises 255 residues: Imidazole glycerol phosphate synthase subunit HisF (255 aa).

Catalysis depends on residues D12 and D131.

Belongs to the HisA/HisF family. Heterodimer of HisH and HisF.

It localises to the cytoplasm. The enzyme catalyses 5-[(5-phospho-1-deoxy-D-ribulos-1-ylimino)methylamino]-1-(5-phospho-beta-D-ribosyl)imidazole-4-carboxamide + L-glutamine = D-erythro-1-(imidazol-4-yl)glycerol 3-phosphate + 5-amino-1-(5-phospho-beta-D-ribosyl)imidazole-4-carboxamide + L-glutamate + H(+). The protein operates within amino-acid biosynthesis; L-histidine biosynthesis; L-histidine from 5-phospho-alpha-D-ribose 1-diphosphate: step 5/9. IGPS catalyzes the conversion of PRFAR and glutamine to IGP, AICAR and glutamate. The HisF subunit catalyzes the cyclization activity that produces IGP and AICAR from PRFAR using the ammonia provided by the HisH subunit. The polypeptide is Imidazole glycerol phosphate synthase subunit HisF (Salinispora arenicola (strain CNS-205)).